The chain runs to 450 residues: MLSILWNLAAFIIALGVLITVHEFGHFWVARRCGVRVERFSIGFGKALWRRTDRYGTEYVIALIPLGGYVKMLDERAEPVAPELRRHAFNNKTVGQRAAIIAAGPVANFIFAIFAYWLVFIIGVPGVRPVIGEITPNSIAAQAQIAPGTELKAVDGIETPDWDAVRLQLVSKIGDQQTTVSVAPFGSDQRQDKTLDLRHWAFEPDKQDPVSSLGIRPRGPQIEPVLSEVQANSAASKAGLQAGDRIVKVDGQPLTQWMKFVTFVRDNPGKPLALEIERQGSALSLTLTPDTKSVNGKAEGFAGVVPKIIPLPEEYKTIRQYGPFSAILEATDKTWQLMKLTVNMLGKLITGDVKLNNLSGPISIAQGAGMSAEFGVIYYLMFLALISVNLGIINLFPLPVLDGGHLLFLAIEKLKGGPVSERVQDFSYRIGSILLVLLMGLALFNDFSRL.

Histidine 22 provides a ligand contact to Zn(2+). Glutamate 23 is an active-site residue. Histidine 26 lines the Zn(2+) pocket. The helical transmembrane segment at 98–120 (AAIIAAGPVANFIFAIFAYWLVF) threads the bilayer. 2 PDZ domains span residues 115-186 (AYWL…APFG) and 199-291 (HWAF…TPDT). 2 helical membrane passes run 376–398 (VIYY…LFPL) and 426–445 (FSYR…ALFN).

This sequence belongs to the peptidase M50B family. As to quaternary structure, interacts with RseA. Zn(2+) is required as a cofactor.

The protein localises to the cell inner membrane. Functionally, a site-2 regulated intramembrane protease (S2P) that cleaves the peptide bond between 'Ala-108' and 'Cys-109' in the transmembrane region of RseA. Part of a regulated intramembrane proteolysis (RIP) cascade. Acts on DegS-cleaved RseA to release the cytoplasmic domain of RseA. This provides the cell with sigma-E (RpoE) activity through the proteolysis of RseA. The sequence is that of Regulator of sigma E protease (rseP) from Salmonella typhi.